A 185-amino-acid chain; its full sequence is NEDD8-conjugating enzyme UBE2F (185 aa).

M1 bears the N-acetylmethionine mark. The UBC core domain maps to 32–185 (VRDKLLVKEV…VDEYIKRYAR (154 aa)). C116 acts as the Glycyl thioester intermediate in catalysis.

It belongs to the ubiquitin-conjugating enzyme family. UBE2F subfamily. In terms of assembly, interacts with UBA3 and RBX2. Interacts (N-terminally acetylated form) with (via DCUN1 domain) DCUN1D1, DCUN1D2, DCUN1D3, DCUN1D4 and DCUN1D5. In terms of processing, the acetylation of Met-1 increases affinity for DCUN1D3 by about 2 orders of magnitude and is crucial for NEDD8 transfer to cullins.

It catalyses the reaction [E1 NEDD8-activating enzyme]-S-[NEDD8 protein]-yl-L-cysteine + [E2 NEDD8-conjugating enzyme]-L-cysteine = [E1 NEDD8-activating enzyme]-L-cysteine + [E2 NEDD8-conjugating enzyme]-S-[NEDD8-protein]-yl-L-cysteine.. It functions in the pathway protein modification; protein neddylation. Functionally, accepts the ubiquitin-like protein NEDD8 from the UBA3-NAE1 E1 complex and catalyzes its covalent attachment to other proteins. Together with the E3 ubiquitin ligase RNF7/RBX2, specifically neddylates cullin-5 (CUL5). Does not neddylate CUL1, CUL2, CUL3, CUL4A or CUL4B. Mediates neddylation of the CUL9-RBX1 complex. This chain is NEDD8-conjugating enzyme UBE2F (Ube2f), found in Rattus norvegicus (Rat).